A 177-amino-acid polypeptide reads, in one-letter code: 18.9 kDa heat shock protein (177 aa).

The interval 1-35 is disordered; it reads MSMITSMLGRKQNAQQKGGGGGGRTGGGGGGEIEP. Over residues 17–32 the composition is skewed to gly residues; that stretch reads KGGGGGGRTGGGGGGE. The region spanning 63 to 177 is the sHSP domain; the sequence is AAGVPSTASM…PHARIIPITN (115 aa).

The protein belongs to the small heat shock protein (HSP20) family. In terms of assembly, may form oligomeric structures.

It localises to the cytoplasm. In Oryza sativa subsp. japonica (Rice), this protein is 18.9 kDa heat shock protein (HSP18.9).